Consider the following 111-residue polypeptide: Resistin-like alpha (111 aa).

Positions 1 to 23 (MKTATCSLLICVFLLQLMVPVNT) are cleaved as a signal peptide. Disulfide bonds link C55/C108, C67/C107, C76/C93, C78/C95, and C82/C97.

This sequence belongs to the resistin/FIZZ family. Monomer. In terms of tissue distribution, highest levels in adipose tissue.

The protein localises to the secreted. Probable hormone. Plays a role in pulmonary vascular remodeling. The protein is Resistin-like alpha (Retnla) of Rattus norvegicus (Rat).